A 91-amino-acid chain; its full sequence is UPF0728 protein v1g117062 (91 aa).

The protein belongs to the UPF0728 family.

In Nematostella vectensis (Starlet sea anemone), this protein is UPF0728 protein v1g117062.